We begin with the raw amino-acid sequence, 205 residues long: Basigin (205 aa).

Residues 1 to 18 form the signal peptide; the sequence is MAAALFVLLGFALLGTHG. The 85-residue stretch at 19 to 103 folds into the Ig-like C2-type domain; sequence ASGAAGTVFT…MGTANIQLHG (85 aa). The Extracellular segment spans residues 19–205; that stretch reads ASGAAGTVFT…AIITLRVRSH (187 aa). 2 disulfides stabilise this stretch: Cys41–Cys87 and Cys126–Cys185. Asn44, Asn152, and Asn186 each carry an N-linked (GlcNAc...) asparagine glycan. Positions 105–199 constitute an Ig-like V-type domain; sequence PRVKAVKSSE…SKGSDQAIIT (95 aa).

As to quaternary structure, homooligomer. Interacts with VEGFA, KDR/VEGFR2, PPIA/CYPA, SLC16A12, SLC16A11, ATP1B2, MAG, L1CAM and AJAP1. Interacts with SLC16A1; interaction mediates SLC16A1 targeting to the plasma membrane. Interacts with SLC16A3; interaction mediates SLC16A3 targeting to the plasma membrane. Interacts with PPIL2; regulates BSG transport to the cell membrane. Interacts with XKR8; promoting its localization at the cell membrane. Interacts with SLC16A6; this interaction mediates targeting to the plasma membrane.

The protein resides in the cell membrane. It localises to the endoplasmic reticulum membrane. Its subcellular location is the basolateral cell membrane. Functionally, signaling receptor for cyclophilins, essential for PPIA/CYPA and PPIB/CYPB-dependent signaling related to chemotaxis and adhesion of immune cells. Plays an important role in targeting the monocarboxylate transporters SLC16A1/GLUT1, SLC16A3, SLC16A8, SLC16A11 and SLC16A12 to the plasma membrane. Acts as a coreceptor for vascular endothelial growth factor receptor 2 (KDR/VEGFR2) in endothelial cells enhancing its VEGFA-mediated activation and downstream signaling. Promotes angiogenesis through EPAS1/HIF2A-mediated up-regulation of VEGFA and KDR/VEGFR2 in endothelial cells. This Bos taurus (Bovine) protein is Basigin (BSG).